Consider the following 144-residue polypeptide: Endoribonuclease YbeY (144 aa).

Zn(2+) is bound by residues His-108, His-112, and His-118.

The protein belongs to the endoribonuclease YbeY family. It depends on Zn(2+) as a cofactor.

It is found in the cytoplasm. In terms of biological role, single strand-specific metallo-endoribonuclease involved in late-stage 70S ribosome quality control and in maturation of the 3' terminus of the 16S rRNA. This chain is Endoribonuclease YbeY, found in Phytoplasma australiense.